The following is a 348-amino-acid chain: Cyclic AMP-dependent transcription factor ATF-4 (348 aa).

A Glycyl lysine isopeptide (Lys-Gly) (interchain with G-Cter in SUMO2) cross-link involves residue Lys53. 2 disordered regions span residues 151 to 174 (QGAP…TPDH) and 187 to 265 (PEGD…GEKM). Ser211, Ser215, Ser220, Ser227, and Ser231 each carry phosphoserine. The short motif at 211 to 220 (SDNDSGICMS) is the BetaTrCP degron motif element. Polar residues predominate over residues 221–241 (PDSSLGSPQDSPSTSRGSPNK). At Pro232 the chain carries 4-hydroxyproline. Residues Ser242 and Ser245 each carry the phosphoserine modification. The span at 242–253 (SLLSPGALSGSS) shows a compositional bias: low complexity. Glycyl lysine isopeptide (Lys-Gly) (interchain with G-Cter in SUMO2) cross-links involve residues Lys256, Lys264, and Lys269. The 64-residue stretch at 275 to 338 (LDKKLKKMEQ…QYLKDQIEEV (64 aa)) folds into the bZIP domain. Residues 277–297 (KKLKKMEQNKTAATRYRQKKR) are basic motif. The segment at 302 to 338 (ALTGECKELEKKNEALKEKADSLAKEIQYLKDQIEEV) is interaction with GABBR1. Positions 303–331 (LTGECKELEKKNEALKEKADSLAKEIQYL) are leucine-zipper. Lys308 carries the post-translational modification N6-acetyllysine.

It belongs to the bZIP family. In terms of assembly, binds DNA as a homodimer and as a heterodimer. Heterodimer; heterodimerizes with CEBPB. Heterodimer; heterodimerizes with DDIT3/CHOP. Interacts with CEP290 (via an N-terminal region). Interacts with NEK6, DAPK2 (isoform 2) and ZIPK/DAPK3. Interacts (via its leucine zipper domain) with GABBR1 and GABBR2 (via their C-termini). Forms a heterodimer with TXLNG in osteoblasts. Interacts (via its DNA binding domain) with FOXO1 (C-terminal half); the interaction occurs in osteoblasts and regulates glucose homeostasis through suppression of beta-cell proliferation and a decrease in insulin production. Interacts with SATB2; the interaction results in enhanced DNA binding and transactivation by these transcription factors. Interacts with ABRAXAS2. Interacts with TRIB3, inhibiting the transactivation activity of ATF4. Interacts with DISC1; which inhibits ATF4 transcription factor activity by disrupting ATF4 dimerization and DNA-binding. Interacts with EP300/p300; EP300/p300 stabilizes ATF4 and increases its transcriptional activity independently of its catalytic activity by preventing its ubiquitination. Ubiquitinated by SCF(BTRC) in response to mTORC1 signal, followed by proteasomal degradation and leading to down-regulate expression of SIRT4. Interaction with EP300/p300 inhibits ubiquitination by SCF(BTRC). In terms of processing, phosphorylation at Ser-242 by RPS6KA3/RSK2 in osteoblasts enhances transactivation activity and promotes osteoblast differentiation. Phosphorylated on the betaTrCP degron motif at Ser-215, followed by phosphorylation at Ser-220, Ser-227, Ser-231 and Ser-245, promoting interaction with BTRC and ubiquitination. Phosphorylation is promoted by mTORC1. Phosphorylation at Ser-211 by CK2 decreases its stability. Phosphorylated by NEK6. Post-translationally, hydroxylated by PHD3, leading to decreased protein stability.

It is found in the nucleus. Its subcellular location is the nucleus speckle. The protein resides in the cytoplasm. The protein localises to the cell membrane. It localises to the cytoskeleton. It is found in the microtubule organizing center. Its subcellular location is the centrosome. Transcription factor that binds the cAMP response element (CRE) (consensus: 5'-GTGACGT[AC][AG]-3') and displays two biological functions, as regulator of metabolic and redox processes under normal cellular conditions, and as master transcription factor during integrated stress response (ISR). Binds to asymmetric CRE's as a heterodimer and to palindromic CRE's as a homodimer. Core effector of the ISR, which is required for adaptation to various stress such as endoplasmic reticulum (ER) stress, amino acid starvation, mitochondrial stress or oxidative stress. During ISR, ATF4 translation is induced via an alternative ribosome translation re-initiation mechanism in response to EIF2S1/eIF-2-alpha phosphorylation, and stress-induced ATF4 acts as a master transcription factor of stress-responsive genes in order to promote cell recovery. Promotes the transcription of genes linked to amino acid sufficiency and resistance to oxidative stress to protect cells against metabolic consequences of ER oxidation. Activates the transcription of NLRP1, possibly in concert with other factors in response to ER stress. Activates the transcription of asparagine synthetase (ASNS) in response to amino acid deprivation or ER stress. However, when associated with DDIT3/CHOP, the transcriptional activation of the ASNS gene is inhibited in response to amino acid deprivation. Together with DDIT3/CHOP, mediates programmed cell death by promoting the expression of genes involved in cellular amino acid metabolic processes, mRNA translation and the terminal unfolded protein response (terminal UPR), a cellular response that elicits programmed cell death when ER stress is prolonged and unresolved. Activates the expression of COX7A2L/SCAF1 downstream of the EIF2AK3/PERK-mediated unfolded protein response, thereby promoting formation of respiratory chain supercomplexes and increasing mitochondrial oxidative phosphorylation. Together with DDIT3/CHOP, activates the transcription of the IRS-regulator TRIB3 and promotes ER stress-induced neuronal cell death by regulating the expression of BBC3/PUMA in response to ER stress. May cooperate with the UPR transcriptional regulator QRICH1 to regulate ER protein homeostasis which is critical for cell viability in response to ER stress. In the absence of stress, ATF4 translation is at low levels and it is required for normal metabolic processes such as embryonic lens formation, fetal liver hematopoiesis, bone development and synaptic plasticity. Acts as a regulator of osteoblast differentiation in response to phosphorylation by RPS6KA3/RSK2: phosphorylation in osteoblasts enhances transactivation activity and promotes expression of osteoblast-specific genes and post-transcriptionally regulates the synthesis of Type I collagen, the main constituent of the bone matrix. Cooperates with FOXO1 in osteoblasts to regulate glucose homeostasis through suppression of beta-cell production and decrease in insulin production. Activates transcription of SIRT4. Regulates the circadian expression of the core clock component PER2 and the serotonin transporter SLC6A4. Binds in a circadian time-dependent manner to the cAMP response elements (CRE) in the SLC6A4 and PER2 promoters and periodically activates the transcription of these genes. Mainly acts as a transcriptional activator in cellular stress adaptation, but it can also act as a transcriptional repressor: acts as a regulator of synaptic plasticity by repressing transcription, thereby inhibiting induction and maintenance of long-term memory. Regulates synaptic functions via interaction with DISC1 in neurons, which inhibits ATF4 transcription factor activity by disrupting ATF4 dimerization and DNA-binding. The polypeptide is Cyclic AMP-dependent transcription factor ATF-4 (Bos taurus (Bovine)).